A 180-amino-acid chain; its full sequence is Adenosine 5'-phosphosulfate reductase (180 aa).

4 residues coordinate [4Fe-4S] cluster: Cys-57, Cys-58, Cys-140, and Cys-143. Cys-168 acts as the Nucleophile; cysteine thiosulfonate intermediate in catalysis.

Belongs to the PAPS reductase family. CysH subfamily. [4Fe-4S] cluster is required as a cofactor.

It localises to the cytoplasm. It carries out the reaction [thioredoxin]-disulfide + sulfite + AMP + 2 H(+) = adenosine 5'-phosphosulfate + [thioredoxin]-dithiol. The protein operates within sulfur metabolism; hydrogen sulfide biosynthesis; sulfite from sulfate. Catalyzes the formation of sulfite from adenosine 5'-phosphosulfate (APS) using thioredoxin as an electron donor. This chain is Adenosine 5'-phosphosulfate reductase, found in Rhizobium tropici.